The primary structure comprises 610 residues: Glutamine--fructose-6-phosphate aminotransferase [isomerizing] (610 aa).

Cys-2 serves as the catalytic Nucleophile; for GATase activity. The region spanning Cys-2–Asp-217 is the Glutamine amidotransferase type-2 domain. SIS domains are found at residues Ile-284–Ser-424 and Leu-453–Pro-600. Lys-605 (for Fru-6P isomerization activity) is an active-site residue.

In terms of assembly, homodimer.

The protein localises to the cytoplasm. The enzyme catalyses D-fructose 6-phosphate + L-glutamine = D-glucosamine 6-phosphate + L-glutamate. In terms of biological role, catalyzes the first step in hexosamine metabolism, converting fructose-6P into glucosamine-6P using glutamine as a nitrogen source. The sequence is that of Glutamine--fructose-6-phosphate aminotransferase [isomerizing] from Clostridium perfringens (strain 13 / Type A).